Reading from the N-terminus, the 417-residue chain is Serine hydroxymethyltransferase (417 aa).

(6S)-5,6,7,8-tetrahydrofolate contacts are provided by residues Leu117 and 121-123 (GHL). Lys226 is modified (N6-(pyridoxal phosphate)lysine).

It belongs to the SHMT family. As to quaternary structure, homodimer. It depends on pyridoxal 5'-phosphate as a cofactor.

Its subcellular location is the cytoplasm. The enzyme catalyses (6R)-5,10-methylene-5,6,7,8-tetrahydrofolate + glycine + H2O = (6S)-5,6,7,8-tetrahydrofolate + L-serine. It functions in the pathway one-carbon metabolism; tetrahydrofolate interconversion. It participates in amino-acid biosynthesis; glycine biosynthesis; glycine from L-serine: step 1/1. In terms of biological role, catalyzes the reversible interconversion of serine and glycine with tetrahydrofolate (THF) serving as the one-carbon carrier. This reaction serves as the major source of one-carbon groups required for the biosynthesis of purines, thymidylate, methionine, and other important biomolecules. Also exhibits THF-independent aldolase activity toward beta-hydroxyamino acids, producing glycine and aldehydes, via a retro-aldol mechanism. This chain is Serine hydroxymethyltransferase, found in Syntrophus aciditrophicus (strain SB).